A 177-amino-acid polypeptide reads, in one-letter code: MSELSTVARPYAKAAFDFALEQGQLDKWQEMLQFSAFVAENEQVAEYINSSLASGQISETFIKICGDQLDQYGQNFIRVMAENKRLAVLPMVFDTFVSLRAEHEAVKDVTIFSANELSQAQEDKIAKAMEKRLGQKVRLTNQIDNSLIAGVIIKYDDVVIDGSSRGQLNRLASALSL.

Belongs to the ATPase delta chain family. F-type ATPases have 2 components, F(1) - the catalytic core - and F(0) - the membrane proton channel. F(1) has five subunits: alpha(3), beta(3), gamma(1), delta(1), epsilon(1). F(0) has three main subunits: a(1), b(2) and c(10-14). The alpha and beta chains form an alternating ring which encloses part of the gamma chain. F(1) is attached to F(0) by a central stalk formed by the gamma and epsilon chains, while a peripheral stalk is formed by the delta and b chains.

It is found in the cell inner membrane. F(1)F(0) ATP synthase produces ATP from ADP in the presence of a proton or sodium gradient. F-type ATPases consist of two structural domains, F(1) containing the extramembraneous catalytic core and F(0) containing the membrane proton channel, linked together by a central stalk and a peripheral stalk. During catalysis, ATP synthesis in the catalytic domain of F(1) is coupled via a rotary mechanism of the central stalk subunits to proton translocation. Its function is as follows. This protein is part of the stalk that links CF(0) to CF(1). It either transmits conformational changes from CF(0) to CF(1) or is implicated in proton conduction. This is ATP synthase subunit delta from Actinobacillus pleuropneumoniae serotype 7 (strain AP76).